We begin with the raw amino-acid sequence, 239 residues long: LexA repressor (239 aa).

The segment at residues 26-46 is a DNA-binding region (H-T-H motif); that stretch reads FDEMKDALDLASKSGIHRLIT. Active-site for autocatalytic cleavage activity residues include Ser-159 and Lys-197.

Belongs to the peptidase S24 family. Homodimer.

The enzyme catalyses Hydrolysis of Ala-|-Gly bond in repressor LexA.. Its function is as follows. Represses a number of genes involved in the response to DNA damage (SOS response), including recA and lexA. In the presence of single-stranded DNA, RecA interacts with LexA causing an autocatalytic cleavage which disrupts the DNA-binding part of LexA, leading to derepression of the SOS regulon and eventually DNA repair. This Allorhizobium ampelinum (strain ATCC BAA-846 / DSM 112012 / S4) (Agrobacterium vitis (strain S4)) protein is LexA repressor.